The chain runs to 473 residues: Cannabinoid receptor 1 (473 aa).

Topologically, residues 1–118 are extracellular; that stretch reads MKSILDGLAD…CFMILTASQQ (118 aa). The tract at residues 2 to 23 is required for mitochondrial localization; that stretch reads KSILDGLADTTFRTITTDLLYM. N-linked (GlcNAc...) asparagine glycans are attached at residues N79 and N85. A helical membrane pass occupies residues 119 to 144; the sequence is LIIAVLSLTLGTFTVLENFLVLCVIL. Topologically, residues 145–156 are cytoplasmic; that stretch reads QSRTLRCRPSYH. The helical transmembrane segment at 157 to 177 threads the bilayer; that stretch reads FIGSLAVADLLGSVIFVYSFL. Residues 178–189 lie on the Extracellular side of the membrane; the sequence is DFHVFHRKDSSN. Residues 190 to 214 traverse the membrane as a helical segment; that stretch reads VFLFKLGGVTASFTASVGSLFLTAI. At 215 to 234 the chain is on the cytoplasmic side; it reads DRYISIHRPLAYKRIVTRTK. A helical membrane pass occupies residues 235-257; sequence AVIAFCVMWTIAIIIAVLPLLGW. The Extracellular portion of the chain corresponds to 258–275; the sequence is NCKKLKSVCSDIFPLIDE. Residues 276–301 traverse the membrane as a helical segment; that stretch reads NYLMFWIGVTSILLLFIVYAYVYILW. Over 302 to 346 the chain is Cytoplasmic; sequence KAHSHAVRMLQRGTQKSIIIHTSEDGKVQITRPEQTRMDIRLAKT. Residues 347 to 367 traverse the membrane as a helical segment; sequence LVLILVVLIICWGPLLAIMVY. At 368–379 the chain is on the extracellular side; sequence DVFGKMNNPIKT. The chain crosses the membrane as a helical span at residues 380-401; that stretch reads VFAFCSMLCLMDSTVNPIIYAL. Residues 402-473 are Cytoplasmic-facing; the sequence is RSQDLRHAFL…VSTETSGEAV (72 aa). Residue C417 is the site of S-palmitoyl cysteine attachment.

It belongs to the G-protein coupled receptor 1 family. Palmitoylation at Cys-417 is important for recruitment at both plasma membrane and lipid rafts and association with G protein alpha subunits.

It localises to the cell membrane. Its subcellular location is the mitochondrion outer membrane. It is found in the cell projection. The protein localises to the axon. The protein resides in the presynapse. Its activity is regulated as follows. Hemopressin, a peptide derived from hemoglobin subunit alpha (HBA1 and/or HBA2), acts as an antagonist peptide: hemopressin-binding efficiently blocks cannabinoid receptor CNR1 and subsequent signaling. Functionally, G-protein coupled receptor for cannabinoids. Mediates many cannabinoid-induced effects in the central nervous system (CNS), as well as in peripheral tissues. Regulates cellular respiration and energy production in response to cannabinoids. Signaling typically involves reduction in cyclic AMP. In Taricha granulosa (Roughskin newt), this protein is Cannabinoid receptor 1 (CNR1).